Consider the following 198-residue polypeptide: Recombination protein RecR (198 aa).

Residues 57–72 form a C4-type zinc finger; it reads CSVCGHITDRDPCYIC. A Toprim domain is found at 80–175; that stretch reads SVVCVVQEPK…KVTRIAHGLP (96 aa).

This sequence belongs to the RecR family.

Functionally, may play a role in DNA repair. It seems to be involved in an RecBC-independent recombinational process of DNA repair. It may act with RecF and RecO. This is Recombination protein RecR from Bacillus thuringiensis (strain Al Hakam).